The sequence spans 360 residues: Peptide chain release factor 1 (360 aa).

N5-methylglutamine is present on glutamine 235.

It belongs to the prokaryotic/mitochondrial release factor family. Post-translationally, methylated by PrmC. Methylation increases the termination efficiency of RF1.

Its subcellular location is the cytoplasm. Functionally, peptide chain release factor 1 directs the termination of translation in response to the peptide chain termination codons UAG and UAA. The protein is Peptide chain release factor 1 of Burkholderia cenocepacia (strain HI2424).